A 446-amino-acid chain; its full sequence is Probable D-serine dehydratase (446 aa).

K118 carries the post-translational modification N6-(pyridoxal phosphate)lysine.

This sequence belongs to the serine/threonine dehydratase family. DsdA subfamily. The cofactor is pyridoxal 5'-phosphate.

The catalysed reaction is D-serine = pyruvate + NH4(+). In Ectopseudomonas mendocina (strain ymp) (Pseudomonas mendocina), this protein is Probable D-serine dehydratase.